The sequence spans 865 residues: MITTKELRNKFINYFESKNHSHQPSSSLIPFGDDTLLFTNAGMVQFKDVFLGIEKKDFSRAVTVQKCLRAGGKHNDLDNVGYTARHHTFFEMLGNFSFGDYFKKEAISFAWEFLTKEIKLPVEKLWVTIYASDDEAFDVWHKHIGLAKERIIRIDSSDNFWSMGDTGPCGPCTEIFYDHGEDVAGGLPGTPEQDGDRYIEIWNIVFMQYNRHADGSTTDLPKPSVDTGMGLERISAVLQNVHSNYEIDLFQALIKKAQQVTHAKDINSPSLKVIADHIRACAFLIADGVLPANEGRGYVLRRIIRRAIRHGNKVGAKEIFFYKLVAELVSQMGEAYSQLIDKRELIEKTLIKEEELFLKTIENGIKIFDAEIENLKDNTISGEVAFKLYDTYGFPFDLTADMAREKGLKVDEQAFLAQMQIQKQRSKEAGKFNVDYNSLINSQVKSEFRGYSTLIEDAKVLEIYQDGQLVASTSEQVSAVVVLDKTPFYAESGGQVGDKGILEGVGFEFVVEDVQKSGEAILHIGKLVKGRLNLNDELTARVSDKPRLATAANHSATHLLYKALKLVLGGHAEQKGSLVDENRLRFDFTHDKAISRSEIEQIELLVNQQIRANYPVTTIETSQQKAKSLGAEALFGEKYGDIVRVISMGDFSIELCGGTHVAYTGDIGLFKVTSEGSIASGVRRIEAVTADKAIRHTFTNENKIIAIKDSLKANDTNLIDKIKSMLEQIKNQEKQIAKLKKELLSGSSNDIKETSIGDIKIVVANVDGVDVKTLRNKIDDYKSKNTKVIAVLTTTNADKVQFVIGVSNALTTLIKAGDIAKELSSHIDGKGGGRADMAQGGGNNSANIDQALSQVEKFILNNIKE.

Zn(2+) is bound by residues His-554, His-558, Cys-656, and His-660.

This sequence belongs to the class-II aminoacyl-tRNA synthetase family. It depends on Zn(2+) as a cofactor.

The protein localises to the cytoplasm. The catalysed reaction is tRNA(Ala) + L-alanine + ATP = L-alanyl-tRNA(Ala) + AMP + diphosphate. In terms of biological role, catalyzes the attachment of alanine to tRNA(Ala) in a two-step reaction: alanine is first activated by ATP to form Ala-AMP and then transferred to the acceptor end of tRNA(Ala). Also edits incorrectly charged Ser-tRNA(Ala) and Gly-tRNA(Ala) via its editing domain. The protein is Alanine--tRNA ligase of Francisella tularensis subsp. holarctica (strain LVS).